The sequence spans 475 residues: Sulfate adenylyltransferase subunit 1 (475 aa).

A tr-type G domain is found at 25-239; sequence KSLLRFLTCG…EVLETVEIQR (215 aa). Residues 34–41 form a G1 region; it reads GSVDDGKS. 34-41 serves as a coordination point for GTP; sequence GSVDDGKS. A G2 region spans residues 92 to 96; the sequence is GITID. Residues 113-116 are G3; that stretch reads DTPG. Residues 113-117 and 168-171 contribute to the GTP site; these read DTPGH and NKMD. The tract at residues 168 to 171 is G4; sequence NKMD. Residues 206–208 form a G5 region; it reads SAL.

The protein belongs to the TRAFAC class translation factor GTPase superfamily. Classic translation factor GTPase family. CysN/NodQ subfamily. As to quaternary structure, heterodimer composed of CysD, the smaller subunit, and CysN.

It catalyses the reaction sulfate + ATP + H(+) = adenosine 5'-phosphosulfate + diphosphate. It functions in the pathway sulfur metabolism; hydrogen sulfide biosynthesis; sulfite from sulfate: step 1/3. In terms of biological role, with CysD forms the ATP sulfurylase (ATPS) that catalyzes the adenylation of sulfate producing adenosine 5'-phosphosulfate (APS) and diphosphate, the first enzymatic step in sulfur assimilation pathway. APS synthesis involves the formation of a high-energy phosphoric-sulfuric acid anhydride bond driven by GTP hydrolysis by CysN coupled to ATP hydrolysis by CysD. This Shigella flexneri protein is Sulfate adenylyltransferase subunit 1.